Reading from the N-terminus, the 112-residue chain is UPF0342 protein SPP_1392 (112 aa).

This sequence belongs to the UPF0342 family.

This is UPF0342 protein SPP_1392 from Streptococcus pneumoniae (strain P1031).